The following is a 298-amino-acid chain: Acetylglutamate kinase (298 aa).

Residues 67–68, Arg89, and Asn193 contribute to the substrate site; that span reads GG.

It belongs to the acetylglutamate kinase family. ArgB subfamily.

It is found in the cytoplasm. It catalyses the reaction N-acetyl-L-glutamate + ATP = N-acetyl-L-glutamyl 5-phosphate + ADP. The protein operates within amino-acid biosynthesis; L-arginine biosynthesis; N(2)-acetyl-L-ornithine from L-glutamate: step 2/4. Its function is as follows. Catalyzes the ATP-dependent phosphorylation of N-acetyl-L-glutamate. In Desulfitobacterium hafniense (strain DSM 10664 / DCB-2), this protein is Acetylglutamate kinase.